Here is a 393-residue protein sequence, read N- to C-terminus: Formate-dependent phosphoribosylglycinamide formyltransferase (393 aa).

N(1)-(5-phospho-beta-D-ribosyl)glycinamide contacts are provided by residues 22 to 23 (EL) and glutamate 82. ATP-binding positions include arginine 114, lysine 155, 160–165 (SSGKGQ), 195–198 (EGFI), and glutamate 203. The ATP-grasp domain maps to 119–308 (RLAAEELGLP…EFALHARAIL (190 aa)). Mg(2+) contacts are provided by glutamate 267 and glutamate 279. Residues aspartate 286, lysine 356, and 363–364 (RR) contribute to the N(1)-(5-phospho-beta-D-ribosyl)glycinamide site.

This sequence belongs to the PurK/PurT family. Homodimer.

The catalysed reaction is N(1)-(5-phospho-beta-D-ribosyl)glycinamide + formate + ATP = N(2)-formyl-N(1)-(5-phospho-beta-D-ribosyl)glycinamide + ADP + phosphate + H(+). Its pathway is purine metabolism; IMP biosynthesis via de novo pathway; N(2)-formyl-N(1)-(5-phospho-D-ribosyl)glycinamide from N(1)-(5-phospho-D-ribosyl)glycinamide (formate route): step 1/1. In terms of biological role, involved in the de novo purine biosynthesis. Catalyzes the transfer of formate to 5-phospho-ribosyl-glycinamide (GAR), producing 5-phospho-ribosyl-N-formylglycinamide (FGAR). Formate is provided by PurU via hydrolysis of 10-formyl-tetrahydrofolate. This Pseudomonas aeruginosa (strain LESB58) protein is Formate-dependent phosphoribosylglycinamide formyltransferase.